The chain runs to 1183 residues: Ribosome biogenesis protein BMS1 (1183 aa).

Residues 1–23 (MEQSNKQHRKAKEKNTAKKKLHT) are compositionally biased toward basic residues. The disordered stretch occupies residues 1 to 39 (MEQSNKQHRKAKEKNTAKKKLHTQGHNAKAFAVAAPGKM). Positions 68–233 (PPFIVAVVGP…SRFISVMKFR (166 aa)) constitute a Bms1-type G domain. Residues 76-83 (GPPGTGKT) form a G1 region. Position 76-83 (76-83 (GPPGTGKT)) interacts with ATP. Positions 104-108 (PITVV) are G2. Residues 119–122 (ECPA) are G3. Residues 172–175 (THLD) form a G4 region. Residues 207-216 (LSGVINGRYP) are G5. Residues 427–494 (EVADHEGMDV…NDDDVQDSEP (68 aa)) form a disordered region. Residues 435–447 (DVESGEESIEDDE) are compositionally biased toward acidic residues. Phosphoserine is present on serine 438. Basic residues predominate over residues 451 to 461 (KGRTSLRKPRI). The segment covering 468-491 (EEDADIDNLPSDEEPYTNDDDVQD) has biased composition (acidic residues). Phosphoserine is present on residues serine 478 and serine 492. Residues threonine 504 and threonine 516 each carry the phosphothreonine modification. 2 positions are modified to phosphoserine: serine 518 and serine 523. The interval 536–559 (KLKKTESKKRTWNIGKLIYMDNIS) is RCL1-binding. Phosphoserine occurs at positions 574 and 578. Disordered regions lie at residues 639 to 709 (GILG…EKKD) and 1123 to 1183 (KDSK…KMRR). Over residues 653–697 (EGGEELYGDFEDLEDGNPSEQAEDNSDKESEDEDENEDTNGDDDN) the composition is skewed to acidic residues. Basic and acidic residues-rich tracts occupy residues 1123 to 1136 (KDSKRKEQKASQRK), 1143 to 1160 (AKMEEEKSQRDKEKKKEY), and 1174 to 1183 (DESRPRKMRR).

The protein belongs to the TRAFAC class translation factor GTPase superfamily. Bms1-like GTPase family. BMS1 subfamily. As to quaternary structure, interacts directly with RCL1 and the U3 snoRNA to form a stable subcomplex. Component of the 90S small subunit processome also known as 90S pre-ribosome that consists of the 35S pre-rRNA, early-associating ribosomal proteins most of which are part of the small ribosomal subunit, the U3 snoRNA and associated proteins.

The protein resides in the cytoplasm. Its subcellular location is the nucleus. It is found in the nucleolus. It catalyses the reaction GTP + H2O = GDP + phosphate + H(+). Its activity is regulated as follows. Interactions with RCL1 stimulates its GTPase and U3 snoRNA binding activities. RCL1 activates BMS1 by promoting GDP/GTP exchange. In terms of biological role, GTPase required for synthesis of 40S ribosomal subunits and for processing the 35S pre-rRNA at sites A0, A1, and A2. Controls access of pre-ribosomal RNA intermediates to RCL1 during ribosome biogenesis by binding of RCL1 in a GTP-dependent manner and, via its affinity to U3 snoRNA, delivering it to pre-ribosomes. GTP-binding and/or GTP hydrolysis may induce conformational rearrangements within the BMS1-RCL1 complex allowing the interaction of RCL1 with its RNA substrate. Required for RCL1 import into the nucleus. The chain is Ribosome biogenesis protein BMS1 (BMS1) from Saccharomyces cerevisiae (strain ATCC 204508 / S288c) (Baker's yeast).